The sequence spans 287 residues: Cysteine-rich repeat secretory protein 59 (287 aa).

A signal peptide spans 1–26; it reads METTKKLSPIFCFSSLLCLFFTMNQA. 2 Gnk2-homologous domains span residues 32-134 and 140-250; these read HMDT…DKFF and KKPN…ITTS. N-linked (GlcNAc...) asparagine glycans are attached at residues N43, N47, N63, N72, N93, N103, N111, and N212.

The protein belongs to the cysteine-rich repeat secretory protein family.

It is found in the secreted. The chain is Cysteine-rich repeat secretory protein 59 (CRRSP59) from Arabidopsis thaliana (Mouse-ear cress).